Here is a 279-residue protein sequence, read N- to C-terminus: Pantothenate synthetase (279 aa).

31–38 (MGNLHGGH) provides a ligand contact to ATP. H38 serves as the catalytic Proton donor. Position 62 (Q62) interacts with (R)-pantoate. A beta-alanine-binding site is contributed by Q62. An ATP-binding site is contributed by 150–153 (GRKD). Q156 contacts (R)-pantoate. ATP-binding positions include V179 and 187–190 (KSSR).

The protein belongs to the pantothenate synthetase family. In terms of assembly, homodimer.

The protein resides in the cytoplasm. The catalysed reaction is (R)-pantoate + beta-alanine + ATP = (R)-pantothenate + AMP + diphosphate + H(+). Its pathway is cofactor biosynthesis; (R)-pantothenate biosynthesis; (R)-pantothenate from (R)-pantoate and beta-alanine: step 1/1. Catalyzes the condensation of pantoate with beta-alanine in an ATP-dependent reaction via a pantoyl-adenylate intermediate. This chain is Pantothenate synthetase, found in Stenotrophomonas maltophilia (strain K279a).